The primary structure comprises 406 residues: Tryptophan synthase beta chain (406 aa).

Position 95 is an N6-(pyridoxal phosphate)lysine (lysine 95).

Belongs to the TrpB family. As to quaternary structure, tetramer of two alpha and two beta chains. It depends on pyridoxal 5'-phosphate as a cofactor.

The enzyme catalyses (1S,2R)-1-C-(indol-3-yl)glycerol 3-phosphate + L-serine = D-glyceraldehyde 3-phosphate + L-tryptophan + H2O. The protein operates within amino-acid biosynthesis; L-tryptophan biosynthesis; L-tryptophan from chorismate: step 5/5. Its function is as follows. The beta subunit is responsible for the synthesis of L-tryptophan from indole and L-serine. The polypeptide is Tryptophan synthase beta chain (Pseudomonas fluorescens (strain ATCC BAA-477 / NRRL B-23932 / Pf-5)).